Here is a 291-residue protein sequence, read N- to C-terminus: 4-diphosphocytidyl-2-C-methyl-D-erythritol kinase (291 aa).

Residue Lys-10 is part of the active site. 99–109 (PMGGGLGGGSS) is a binding site for ATP. Residue Asp-141 is part of the active site.

It belongs to the GHMP kinase family. IspE subfamily. Homodimer.

It carries out the reaction 4-CDP-2-C-methyl-D-erythritol + ATP = 4-CDP-2-C-methyl-D-erythritol 2-phosphate + ADP + H(+). Its pathway is isoprenoid biosynthesis; isopentenyl diphosphate biosynthesis via DXP pathway; isopentenyl diphosphate from 1-deoxy-D-xylulose 5-phosphate: step 3/6. In terms of biological role, catalyzes the phosphorylation of the position 2 hydroxy group of 4-diphosphocytidyl-2C-methyl-D-erythritol. This Proteus mirabilis (strain HI4320) protein is 4-diphosphocytidyl-2-C-methyl-D-erythritol kinase.